Consider the following 239-residue polypeptide: uncharacterized protein (239 aa).

Belongs to the initiator RepB protein family.

Mutations in ORF 239 affects the incN plasmid pUC1 E.coli polA-independence but not its autonomous replication ability. This is an uncharacterized protein from Escherichia coli.